Here is a 268-residue protein sequence, read N- to C-terminus: Lipopolysaccharide core heptose(I) kinase WaaP (268 aa).

Phosphotyrosine; by autocatalysis occurs at positions 30, 48, and 98. The active site involves Asp-163. Tyr-165, Tyr-211, Tyr-231, Tyr-258, and Tyr-264 each carry phosphotyrosine; by autocatalysis.

The protein belongs to the protein kinase superfamily. KdkA/RfaP family. As to quaternary structure, interacts with acyl-AcpP. The WaaP hydrophobic channel can accommodate acyl chains of different lengths, but myristyl-ACP is likely its physiological binding partner. Requires Mg(2+) as cofactor.

Its subcellular location is the cytoplasm. The catalysed reaction is an L-alpha-D-Hep-(1-&gt;3)-L-alpha-D-Hep-(1-&gt;5)-[alpha-Kdo-(2-&gt;4)]-alpha-Kdo-(2-&gt;6)-lipid A + ATP = an L-alpha-D-Hep-(1-&gt;3)-4-O-phospho-L-alpha-D-Hep-(1-&gt;5)-[alpha-Kdo-(2-&gt;4)]-alpha-Kdo-(2-&gt;6)-lipid A + ADP + H(+). The enzyme catalyses L-tyrosyl-[protein] + ATP = O-phospho-L-tyrosyl-[protein] + ADP + H(+). It functions in the pathway bacterial outer membrane biogenesis; LPS core biosynthesis. Its activity is regulated as follows. Acylated-acyl carrier protein (acyl-ACP) acts as a very tightly bound cofactor necessary for the production and stability of active WaaP kinase. Functionally, kinase involved in the biosynthesis of the core oligosaccharide region of lipopolysaccharide (LPS). Catalyzes the phosphorylation of heptose I (HepI), the first heptose added to the Kdo2-lipid A module. Also has protein-tyrosine kinase activity: autophosphorylates on all Tyr residues; in vitro can phosphorylate poly(Glu,Tyr). In Pseudomonas aeruginosa (strain ATCC 15692 / DSM 22644 / CIP 104116 / JCM 14847 / LMG 12228 / 1C / PRS 101 / PAO1), this protein is Lipopolysaccharide core heptose(I) kinase WaaP.